The primary structure comprises 369 residues: Peptide chain release factor 2 (369 aa).

Gln-251 carries the post-translational modification N5-methylglutamine.

This sequence belongs to the prokaryotic/mitochondrial release factor family. Methylated by PrmC. Methylation increases the termination efficiency of RF2.

It is found in the cytoplasm. In terms of biological role, peptide chain release factor 2 directs the termination of translation in response to the peptide chain termination codons UGA and UAA. The chain is Peptide chain release factor 2 from Acidothermus cellulolyticus (strain ATCC 43068 / DSM 8971 / 11B).